The following is a 387-amino-acid chain: MGRIGVLLLNLGGPDQLEDVRPFLYNLFSDPEIIRLPFTWLQKPLAWLISTTRARKSQQNYRLIGGGSPLRRITEEQGKALQAHLASQGQDIQVYIGMRYWHPFTEEAIAAIKQDGITRLVILPLYPQFSISTSGSSFRLLEDLWQRDPQLQAIDYTVIPSWYDRPGYTQAMAELLREELDHFAEPDRVTIFFSAHGVPLSYVTEAGDPYQAEIEGCTALIMQALNRPNPHVLAYQSRVGPVEWLKPYTEEVIPELASQGVNELVVVPISFISEHIETLQEIDMEYRELAEEAGIEHFRRVPALNTHPLFIADLSQLVLEALQGPSRKFDQVVRPQKQVKLYPQERWEWGMTSAAERWNGRLAMLGFLALLLELITGRGPLHLVGLL.

Fe cation contacts are provided by His-196 and Glu-277.

It belongs to the ferrochelatase family.

The protein resides in the cytoplasm. It catalyses the reaction heme b + 2 H(+) = protoporphyrin IX + Fe(2+). The protein operates within porphyrin-containing compound metabolism; protoheme biosynthesis; protoheme from protoporphyrin-IX: step 1/1. In terms of biological role, catalyzes the ferrous insertion into protoporphyrin IX. The chain is Ferrochelatase from Cyanothece sp. (strain PCC 7425 / ATCC 29141).